Reading from the N-terminus, the 618-residue chain is Leucine aminopeptidase 2 (618 aa).

Residues 139–141 and 271–276 each bind a peptide; these read QCQ and PYGGME. His-300 is a binding site for Zn(2+). Catalysis depends on Glu-301, which acts as the Proton acceptor. Zn(2+) contacts are provided by His-304 and Glu-323. The Proton donor role is filled by Tyr-389.

The protein belongs to the peptidase M1 family. Zn(2+) serves as cofactor.

The protein resides in the cytoplasm. The protein localises to the nucleus. The catalysed reaction is an epoxide + H2O = an ethanediol. In terms of biological role, aminopeptidase that preferentially cleaves di- and tripeptides. Also has low epoxide hydrolase activity (in vitro). Can hydrolyze the epoxide leukotriene LTA(4) but it forms preferentially 5,6-dihydroxy-7,9,11,14-eicosatetraenoic acid rather than the cytokine leukotriene B(4) as the product compared to the homologous mammalian enzyme (in vitro). The polypeptide is Leucine aminopeptidase 2 (Aspergillus clavatus (strain ATCC 1007 / CBS 513.65 / DSM 816 / NCTC 3887 / NRRL 1 / QM 1276 / 107)).